The primary structure comprises 174 residues: Nucleoside-triphosphatase THEP1 (174 aa).

ATP-binding positions include G7–T14 and L94–G101.

Belongs to the THEP1 NTPase family.

It carries out the reaction a ribonucleoside 5'-triphosphate + H2O = a ribonucleoside 5'-diphosphate + phosphate + H(+). Its function is as follows. Has nucleotide phosphatase activity towards ATP, GTP, CTP, TTP and UTP. May hydrolyze nucleoside diphosphates with lower efficiency. This Thermotoga maritima (strain ATCC 43589 / DSM 3109 / JCM 10099 / NBRC 100826 / MSB8) protein is Nucleoside-triphosphatase THEP1.